Consider the following 110-residue polypeptide: Large ribosomal subunit protein uL22 (110 aa).

It belongs to the universal ribosomal protein uL22 family. In terms of assembly, part of the 50S ribosomal subunit.

This protein binds specifically to 23S rRNA; its binding is stimulated by other ribosomal proteins, e.g. L4, L17, and L20. It is important during the early stages of 50S assembly. It makes multiple contacts with different domains of the 23S rRNA in the assembled 50S subunit and ribosome. Its function is as follows. The globular domain of the protein is located near the polypeptide exit tunnel on the outside of the subunit, while an extended beta-hairpin is found that lines the wall of the exit tunnel in the center of the 70S ribosome. The polypeptide is Large ribosomal subunit protein uL22 (Yersinia pseudotuberculosis serotype O:1b (strain IP 31758)).